The sequence spans 163 residues: NADH-quinone oxidoreductase subunit I (163 aa).

4Fe-4S ferredoxin-type domains follow at residues 53-83 and 94-123; these read LRRY…IEAG and VRYD…EGPN. [4Fe-4S] cluster is bound by residues cysteine 63, cysteine 66, cysteine 69, cysteine 73, cysteine 103, cysteine 106, cysteine 109, and cysteine 113.

The protein belongs to the complex I 23 kDa subunit family. NDH-1 is composed of 14 different subunits. Subunits NuoA, H, J, K, L, M, N constitute the membrane sector of the complex. [4Fe-4S] cluster is required as a cofactor.

It is found in the cell inner membrane. It carries out the reaction a quinone + NADH + 5 H(+)(in) = a quinol + NAD(+) + 4 H(+)(out). NDH-1 shuttles electrons from NADH, via FMN and iron-sulfur (Fe-S) centers, to quinones in the respiratory chain. The immediate electron acceptor for the enzyme in this species is believed to be ubiquinone. Couples the redox reaction to proton translocation (for every two electrons transferred, four hydrogen ions are translocated across the cytoplasmic membrane), and thus conserves the redox energy in a proton gradient. The sequence is that of NADH-quinone oxidoreductase subunit I from Chelativorans sp. (strain BNC1).